A 194-amino-acid polypeptide reads, in one-letter code: Nucleoside triphosphate pyrophosphatase (194 aa).

The active-site Proton acceptor is the Asp-68.

This sequence belongs to the Maf family. It depends on a divalent metal cation as a cofactor.

Its subcellular location is the cytoplasm. It carries out the reaction a ribonucleoside 5'-triphosphate + H2O = a ribonucleoside 5'-phosphate + diphosphate + H(+). The enzyme catalyses a 2'-deoxyribonucleoside 5'-triphosphate + H2O = a 2'-deoxyribonucleoside 5'-phosphate + diphosphate + H(+). Functionally, nucleoside triphosphate pyrophosphatase. May have a dual role in cell division arrest and in preventing the incorporation of modified nucleotides into cellular nucleic acids. The protein is Nucleoside triphosphate pyrophosphatase of Corynebacterium jeikeium (strain K411).